A 323-amino-acid chain; its full sequence is DNA-directed RNA polymerase subunit alpha 1 (323 aa).

Residues M1–R228 are alpha N-terminal domain (alpha-NTD). Residues I244–K323 are alpha C-terminal domain (alpha-CTD).

This sequence belongs to the RNA polymerase alpha chain family. Homodimer. The RNAP catalytic core consists of 2 alpha, 1 beta, 1 beta' and 1 omega subunit. When a sigma factor is associated with the core the holoenzyme is formed, which can initiate transcription.

The catalysed reaction is RNA(n) + a ribonucleoside 5'-triphosphate = RNA(n+1) + diphosphate. In terms of biological role, DNA-dependent RNA polymerase catalyzes the transcription of DNA into RNA using the four ribonucleoside triphosphates as substrates. The sequence is that of DNA-directed RNA polymerase subunit alpha 1 from Francisella tularensis subsp. novicida (strain U112).